Reading from the N-terminus, the 190-residue chain is Membrane protein FAM174A (190 aa).

The first 29 residues, 1–29 (MPTRRGCSGPCHFLASAFVLLLLPALNQS), serve as a signal peptide directing secretion. Residues Asn27 and Asn83 are each glycosylated (N-linked (GlcNAc...) asparagine). Over 30–123 (VVLPSTVPRA…NPSDKPMTQR (94 aa)) the chain is Extracellular. Residues 37–119 (PRAVQESKPL…AVSPNPSDKP (83 aa)) form a disordered region. Residues 124-144 (ALTVLVVVSAAVLVYFVVRTV) form a helical membrane-spanning segment. The Cytoplasmic segment spans residues 145–190 (RMRRRNRKTRRYGVLDTNIENMELTPLEQDDEDDDNTLFDANHPRR). A disordered region spans residues 168–190 (LTPLEQDDEDDDNTLFDANHPRR). Residues 172-181 (EQDDEDDDNT) are compositionally biased toward acidic residues.

Belongs to the FAM174 family.

It is found in the membrane. This is Membrane protein FAM174A (Fam174a) from Rattus norvegicus (Rat).